Here is a 584-residue protein sequence, read N- to C-terminus: Aspartate--tRNA ligase (584 aa).

Glu169 provides a ligand contact to L-aspartate. Residues 193 to 196 form an aspartate region; sequence QLFK. Arg215 is a binding site for L-aspartate. ATP is bound by residues 215–217 and Gln224; that span reads RDE. Residue His446 coordinates L-aspartate. Glu480 is an ATP binding site. Residue Arg487 coordinates L-aspartate. 532 to 535 is an ATP binding site; it reads GLDR.

The protein belongs to the class-II aminoacyl-tRNA synthetase family. Type 1 subfamily. In terms of assembly, homodimer.

It is found in the cytoplasm. It catalyses the reaction tRNA(Asp) + L-aspartate + ATP = L-aspartyl-tRNA(Asp) + AMP + diphosphate. Its function is as follows. Catalyzes the attachment of L-aspartate to tRNA(Asp) in a two-step reaction: L-aspartate is first activated by ATP to form Asp-AMP and then transferred to the acceptor end of tRNA(Asp). In Buchnera aphidicola subsp. Schizaphis graminum (strain Sg), this protein is Aspartate--tRNA ligase.